Here is a 1096-residue protein sequence, read N- to C-terminus: Serine/threonine-protein kinase mig-15 (1096 aa).

In terms of domain architecture, Protein kinase spans phenylalanine 21–isoleucine 288. Residues valine 27–valine 35 and lysine 50 contribute to the ATP site. Catalysis depends on aspartate 151, which acts as the Proton acceptor. Over residues histidine 293–aspartate 315 the composition is skewed to basic and acidic residues. Disordered regions lie at residues histidine 293 to methionine 351, leucine 380 to arginine 492, lysine 517 to isoleucine 545, and asparagine 574 to proline 664. The segment covering alanine 316–proline 328 has biased composition (acidic residues). Low complexity predominate over residues leucine 380–glutamine 393. 2 stretches are compositionally biased toward basic and acidic residues: residues valine 397–leucine 408 and asparagine 453–alanine 472. The segment covering serine 532–arginine 541 has biased composition (pro residues). The span at leucine 629–asparagine 642 shows a compositional bias: acidic residues. Positions serine 778–valine 1070 constitute a CNH domain.

It belongs to the protein kinase superfamily. STE Ser/Thr protein kinase family. STE20 subfamily.

The enzyme catalyses L-seryl-[protein] + ATP = O-phospho-L-seryl-[protein] + ADP + H(+). It carries out the reaction L-threonyl-[protein] + ATP = O-phospho-L-threonyl-[protein] + ADP + H(+). Involved in cell migration and signal transduction. Important in several developmental processes including epidermal development, Q neuroblast migrations and muscle arm targeting. Required with ina-1/pat-3 to stabilize the commissural axons growth cone along a precise direction and are required for the cell to respond appropriately when signaling in the growth cone must change. During gonad morphogenesis, involved in distal tip cell (DTC) migration from the dorsal side of the hermaphrodite body to the midbody to allow for formation of gonad arms. In Caenorhabditis elegans, this protein is Serine/threonine-protein kinase mig-15 (mig-15).